The primary structure comprises 251 residues: CDP-diacylglycerol pyrophosphatase (251 aa).

Residues 5–25 form a helical membrane-spanning segment; the sequence is GYFLLAVIVIVAAAGVGYWKF.

It belongs to the Cdh family.

It localises to the cell inner membrane. It catalyses the reaction a CDP-1,2-diacyl-sn-glycerol + H2O = a 1,2-diacyl-sn-glycero-3-phosphate + CMP + 2 H(+). It functions in the pathway phospholipid metabolism; CDP-diacylglycerol degradation; phosphatidate from CDP-diacylglycerol: step 1/1. The chain is CDP-diacylglycerol pyrophosphatase from Salmonella paratyphi A (strain ATCC 9150 / SARB42).